The sequence spans 284 residues: uncharacterized protein (284 aa).

Position 54 (Gln54) interacts with FMN. Catalysis depends on Cys83, which acts as the Proton donor. FMN-binding positions include Lys125, His153, 183–185 (NGG), and 207–208 (AN).

This sequence belongs to the Dus family. It depends on FMN as a cofactor.

Catalyzes the synthesis of dihydrouridine, a modified base found in the D-loop of most tRNAs. This is an uncharacterized protein from Caenorhabditis elegans.